Consider the following 380-residue polypeptide: Glucose-1-phosphate adenylyltransferase (380 aa).

Alpha-D-glucose 1-phosphate-binding positions include Gly-164, 179 to 180 (EK), and Ser-190.

This sequence belongs to the bacterial/plant glucose-1-phosphate adenylyltransferase family. As to quaternary structure, homotetramer.

The catalysed reaction is alpha-D-glucose 1-phosphate + ATP + H(+) = ADP-alpha-D-glucose + diphosphate. The protein operates within glycan biosynthesis; glycogen biosynthesis. Involved in the biosynthesis of ADP-glucose, a building block required for the elongation reactions to produce glycogen. Catalyzes the reaction between ATP and alpha-D-glucose 1-phosphate (G1P) to produce pyrophosphate and ADP-Glc. The sequence is that of Glucose-1-phosphate adenylyltransferase from Lactococcus lactis subsp. cremoris (strain MG1363).